The chain runs to 489 residues: 3-octaprenyl-4-hydroxybenzoate carboxy-lyase (489 aa).

Residue asparagine 172 participates in Mn(2+) binding. Prenylated FMN-binding positions include 175–177 (IYR), 189–191 (RWL), and 194–195 (RG). Mn(2+) is bound at residue glutamate 238. The active-site Proton donor is the aspartate 287.

Belongs to the UbiD family. In terms of assembly, homohexamer. Prenylated FMN is required as a cofactor. Mn(2+) serves as cofactor.

It localises to the cell membrane. It catalyses the reaction a 4-hydroxy-3-(all-trans-polyprenyl)benzoate + H(+) = a 2-(all-trans-polyprenyl)phenol + CO2. The protein operates within cofactor biosynthesis; ubiquinone biosynthesis. Catalyzes the decarboxylation of 3-octaprenyl-4-hydroxy benzoate to 2-octaprenylphenol, an intermediate step in ubiquinone biosynthesis. In Klebsiella pneumoniae (strain 342), this protein is 3-octaprenyl-4-hydroxybenzoate carboxy-lyase.